A 199-amino-acid chain; its full sequence is Recombination protein RecR (199 aa).

The segment at 58 to 73 (CVRCGNITNADLCGIC) adopts a C4-type zinc-finger fold. The Toprim domain maps to 81–176 (GELCVVEDVA…QVTSLAQGVP (96 aa)).

This sequence belongs to the RecR family.

May play a role in DNA repair. It seems to be involved in an RecBC-independent recombinational process of DNA repair. It may act with RecF and RecO. The sequence is that of Recombination protein RecR from Cereibacter sphaeroides (strain ATCC 17029 / ATH 2.4.9) (Rhodobacter sphaeroides).